Here is a 910-residue protein sequence, read N- to C-terminus: DnaJ-like protein MG200 homolog (910 aa).

Residues 4–73 (AKRDYYEVLG…RANYDKYGHD (70 aa)) enclose the J domain. Disordered regions lie at residues 102–160 (DNLS…DDIP), 260–408 (TEPS…LEQD), and 451–486 (VLSDQNPNPQTPTHHEEDAAAPEPTVDETSGESTAP). A compositionally biased stretch (basic residues) spans 111 to 121 (KKEKTKTKKKG). Positions 273–283 (DSDAVTAATTV) are enriched in low complexity. Acidic residues predominate over residues 357–379 (SDEADATNEPTEQDTISEPEQET). Positions 451–462 (VLSDQNPNPQTP) are enriched in polar residues.

This Mycoplasma pneumoniae (strain ATCC 29342 / M129 / Subtype 1) (Mycoplasmoides pneumoniae) protein is DnaJ-like protein MG200 homolog.